We begin with the raw amino-acid sequence, 149 residues long: MKFTYLVSLAAFAVTALGSRPTPPNLEFLFSANLTKGPAYIYDQSDAQIKALQTLTGGIIAGPNFDGTVIGGTALSTRGADGTIRADAHYLIQTSDGANILVTESAAIPYVAVLFDTSSEKYNWLNNVTAWGTPPNLNEINFLEYWQIE.

The signal sequence occupies residues 1–18; it reads MKFTYLVSLAAFAVTALG. N-linked (GlcNAc...) asparagine glycosylation is found at N33 and N127.

In terms of assembly, homotetramer.

It carries out the reaction 2,4,7,9-tetrahydroxy-6-methyl-8-(2-methylbut-3-en-2-yl)-1-oxo-1H-phenalen-3-ol = (2'R)-atrovenetin. The protein operates within secondary metabolite biosynthesis. Its function is as follows. Hydroalkoxylation enzyme; part of the gene cluster that mediates the biosynthesis of phenalenones such as herqueinone, compounds that have been reported to treat tumors, bacterial infections and/or mycoses, and rheumatic diseases. The non-reducing polyketide synthase phnA synthesizes the heptaketide backbone and cyclizes it into the angular, hemiketal-containing naphtho-gamma-pyrone prephenalenone. The product template (PT) domain of phnA catalyzes only the C4-C9 aldol condensation, which is unprecedented among known PT domains. The transformation of prephenalenone to phenalenones requires an FAD-dependent monooxygenase phnB, which catalyzes the C2 aromatic hydroxylation of prephenalenone and ring opening of the gamma-pyrone ring simultaneously. Subsequent intramolecular deprotonation of C3 phenolic oxygen accelerates phenalenone ring closure to yield the tricyclic phenalenone core with a C2 hydroxylation. The prenyltransferase phnF further catalyzes reverse C-prenylation of phenalenone by direct electrophilic substitution at C6, or possibly via first a forward O-prenylation of a neighboring phenol in phenalenone, followed by a Claisen rearrangement. The hydroalkoxylation enzyme phnH catalyzes the 5-exo-trig cyclization via acid catalysis after the spontaneous deprotonation of 7-OH, which leads to the formation of the dihydrobenzofuran atrovenetin. Atrovenetin is further converted to deoxyherqueinone by the O-methyltransferase phnC which can methylate C2-OH to stabilize the northern portion of the phenalenone core. Finally, the oxidoreductase phnG converts deoxyherqueinone to herqueinone via C6 hydroxylation. The sequence is that of Hydroalkoxylation enzyme phnH from Penicillium herquei.